The sequence spans 173 residues: Large ribosomal subunit protein uL16 (173 aa).

This sequence belongs to the universal ribosomal protein uL16 family.

The chain is Large ribosomal subunit protein uL16 from Methanococcus maripaludis (strain DSM 14266 / JCM 13030 / NBRC 101832 / S2 / LL).